A 211-amino-acid chain; its full sequence is Histidine biosynthesis bifunctional protein HisIE (211 aa).

A phosphoribosyl-AMP cyclohydrolase region spans residues 1–107 (MNKLIDFSKG…FNSEIESRFK (107 aa)). Residues 108-211 (IQALAQTIHQ…KGERKKVQEW (104 aa)) are phosphoribosyl-ATP pyrophosphohydrolase.

The protein in the N-terminal section; belongs to the PRA-CH family. In the C-terminal section; belongs to the PRA-PH family.

The protein resides in the cytoplasm. It catalyses the reaction 1-(5-phospho-beta-D-ribosyl)-ATP + H2O = 1-(5-phospho-beta-D-ribosyl)-5'-AMP + diphosphate + H(+). It carries out the reaction 1-(5-phospho-beta-D-ribosyl)-5'-AMP + H2O = 1-(5-phospho-beta-D-ribosyl)-5-[(5-phospho-beta-D-ribosylamino)methylideneamino]imidazole-4-carboxamide. Its pathway is amino-acid biosynthesis; L-histidine biosynthesis; L-histidine from 5-phospho-alpha-D-ribose 1-diphosphate: step 2/9. It participates in amino-acid biosynthesis; L-histidine biosynthesis; L-histidine from 5-phospho-alpha-D-ribose 1-diphosphate: step 3/9. This Staphylococcus epidermidis (strain ATCC 12228 / FDA PCI 1200) protein is Histidine biosynthesis bifunctional protein HisIE.